Here is a 77-residue protein sequence, read N- to C-terminus: Sec-independent protein translocase protein TatA (77 aa).

A helical transmembrane segment spans residues 1 to 21 (MGSLSIWHWIVVIAVVLLLFG). Basic and acidic residues predominate over residues 43 to 60 (MQDDDKAPEKTEPVKSID). Residues 43 to 77 (MQDDDKAPEKTEPVKSIDHGATPSATRTDVGSKAV) are disordered.

Belongs to the TatA/E family. In terms of assembly, the Tat system comprises two distinct complexes: a TatABC complex, containing multiple copies of TatA, TatB and TatC subunits, and a separate TatA complex, containing only TatA subunits. Substrates initially bind to the TatABC complex, which probably triggers association of the separate TatA complex to form the active translocon.

The protein resides in the cell inner membrane. Part of the twin-arginine translocation (Tat) system that transports large folded proteins containing a characteristic twin-arginine motif in their signal peptide across membranes. TatA could form the protein-conducting channel of the Tat system. This is Sec-independent protein translocase protein TatA from Bradyrhizobium sp. (strain BTAi1 / ATCC BAA-1182).